Consider the following 230-residue polypeptide: Thioredoxin domain-containing protein PLP3B (230 aa).

The region spanning 89–173 (VSEGDFLGEV…GIAMDRLVGF (85 aa)) is the Thioredoxin domain. The interval 199-230 (EKRKEEDEEDYEYQESIRRSVRSSANVDSDSD) is disordered. Positions 220–230 (RSSANVDSDSD) are enriched in polar residues.

The protein belongs to the phosducin family. As to quaternary structure, interacts with TUBB2, TUBB3, TUBB4 and TUBB5. In terms of tissue distribution, expressed in roots, cotyledons, leaves, stems and flowers.

Its subcellular location is the cytoplasm. It localises to the nucleus. Tubulin-binding protein involved in microtubule formation. The polypeptide is Thioredoxin domain-containing protein PLP3B (PLP3B) (Arabidopsis thaliana (Mouse-ear cress)).